A 560-amino-acid polypeptide reads, in one-letter code: Dihydroxy-acid dehydratase (560 aa).

A disordered region spans residues 1-20; that stretch reads MGDNLKKRSSMTTDGDNRAP. Residue Cys52 coordinates [2Fe-2S] cluster. Residue Asp84 participates in Mg(2+) binding. [2Fe-2S] cluster is bound at residue Cys125. Mg(2+) contacts are provided by Asp126 and Lys127. Position 127 is an N6-carboxylysine (Lys127). Cys197 serves as a coordination point for [2Fe-2S] cluster. Residue Glu448 coordinates Mg(2+). Ser474 acts as the Proton acceptor in catalysis.

It belongs to the IlvD/Edd family. Homodimer. It depends on [2Fe-2S] cluster as a cofactor. Requires Mg(2+) as cofactor.

The catalysed reaction is (2R)-2,3-dihydroxy-3-methylbutanoate = 3-methyl-2-oxobutanoate + H2O. It catalyses the reaction (2R,3R)-2,3-dihydroxy-3-methylpentanoate = (S)-3-methyl-2-oxopentanoate + H2O. It functions in the pathway amino-acid biosynthesis; L-isoleucine biosynthesis; L-isoleucine from 2-oxobutanoate: step 3/4. The protein operates within amino-acid biosynthesis; L-valine biosynthesis; L-valine from pyruvate: step 3/4. Functionally, functions in the biosynthesis of branched-chain amino acids. Catalyzes the dehydration of (2R,3R)-2,3-dihydroxy-3-methylpentanoate (2,3-dihydroxy-3-methylvalerate) into 2-oxo-3-methylpentanoate (2-oxo-3-methylvalerate) and of (2R)-2,3-dihydroxy-3-methylbutanoate (2,3-dihydroxyisovalerate) into 2-oxo-3-methylbutanoate (2-oxoisovalerate), the penultimate precursor to L-isoleucine and L-valine, respectively. The protein is Dihydroxy-acid dehydratase of Leptospira interrogans serogroup Icterohaemorrhagiae serovar copenhageni (strain Fiocruz L1-130).